The chain runs to 335 residues: Cytoskeleton protein RodZ (335 aa).

The Cytoplasmic portion of the chain corresponds to 1 to 111 (MNTEATHDQN…LGKRRKKRDG (111 aa)). The HTH cro/C1-type domain occupies 19–71 (LRNAREQLGLSQQAVAERLCLKVSTVRDIEEDKAPADLASTFLRGYIRSYARL). The segment at residues 30-49 (QQAVAERLCLKVSTVRDIEE) is a DNA-binding region (H-T-H motif). Residues 112-132 (WLMTFTWLVLFVVIGLSGAWW) traverse the membrane as a helical; Signal-anchor for type II membrane protein segment. Over 133–335 (WQDHKAQQEE…TLNAEQSPAQ (203 aa)) the chain is Periplasmic. Residues 148 to 164 (DQSSAELNNNQSQSVPL) are compositionally biased toward polar residues. The segment at 148-239 (DQSSAELNNN…PDGAAPLPTD (92 aa)) is disordered. Low complexity-rich tracts occupy residues 165 to 205 (DTST…DPQQ) and 217 to 239 (DTAA…LPTD).

It belongs to the RodZ family.

Its subcellular location is the cell inner membrane. Functionally, cytoskeletal protein that is involved in cell-shape control through regulation of the length of the long axis. The protein is Cytoskeleton protein RodZ of Escherichia coli O6:K15:H31 (strain 536 / UPEC).